The chain runs to 471 residues: Ribosomal protein uS12 methylthiotransferase RimO (471 aa).

The 116-residue stretch at 19–134 folds into the MTTase N-terminal domain; sequence PRVGFVSLGC…VMNAVHTHLP (116 aa). Residues cysteine 28, cysteine 64, cysteine 93, cysteine 169, cysteine 173, and cysteine 176 each contribute to the [4Fe-4S] cluster site. Residues 155–396 enclose the Radical SAM core domain; sequence LTPRHYAYLK…MAVAEEVSTA (242 aa). The 73-residue stretch at 399–471 folds into the TRAM domain; that stretch reads QKRVGQTMQV…QGHDLVGQPV (73 aa).

The protein belongs to the methylthiotransferase family. RimO subfamily. Requires [4Fe-4S] cluster as cofactor.

Its subcellular location is the cytoplasm. It catalyses the reaction L-aspartate(89)-[ribosomal protein uS12]-hydrogen + (sulfur carrier)-SH + AH2 + 2 S-adenosyl-L-methionine = 3-methylsulfanyl-L-aspartate(89)-[ribosomal protein uS12]-hydrogen + (sulfur carrier)-H + 5'-deoxyadenosine + L-methionine + A + S-adenosyl-L-homocysteine + 2 H(+). Functionally, catalyzes the methylthiolation of an aspartic acid residue of ribosomal protein uS12. The polypeptide is Ribosomal protein uS12 methylthiotransferase RimO (Delftia acidovorans (strain DSM 14801 / SPH-1)).